Consider the following 449-residue polypeptide: Trigger factor (449 aa).

The region spanning 169 to 254 (GDRITVDFVG…AKQVEAPGEL (86 aa)) is the PPIase FKBP-type domain.

This sequence belongs to the FKBP-type PPIase family. Tig subfamily.

It localises to the cytoplasm. It catalyses the reaction [protein]-peptidylproline (omega=180) = [protein]-peptidylproline (omega=0). Functionally, involved in protein export. Acts as a chaperone by maintaining the newly synthesized protein in an open conformation. Functions as a peptidyl-prolyl cis-trans isomerase. The protein is Trigger factor of Azorhizobium caulinodans (strain ATCC 43989 / DSM 5975 / JCM 20966 / LMG 6465 / NBRC 14845 / NCIMB 13405 / ORS 571).